Reading from the N-terminus, the 264-residue chain is uncharacterized protein (264 aa).

A disordered region spans residues 1 to 20 (MENIEKKCQPETINEDNNDE).

It belongs to the mimivirus R73/L269/L862 family.

This is an uncharacterized protein from Acanthamoeba polyphaga mimivirus (APMV).